The following is a 502-amino-acid chain: Mannitol 2-dehydrogenase (502 aa).

35-46 (IVHVGVGGFHRA) contributes to the NAD(+) binding site.

It belongs to the mannitol dehydrogenase family. Monomer.

The enzyme catalyses D-mannitol + NAD(+) = D-fructose + NADH + H(+). In terms of biological role, catalyzes the NAD(H)-dependent interconversion of D-fructose and D-mannitol in the mannitol metabolic pathway. The polypeptide is Mannitol 2-dehydrogenase (Pyricularia oryzae (strain 70-15 / ATCC MYA-4617 / FGSC 8958) (Rice blast fungus)).